A 333-amino-acid chain; its full sequence is Protein 2 (333 aa).

Disordered stretches follow at residues 1 to 41 and 57 to 84; these read MTGR…SENA and LGAG…LPPT. Positions 24–33 are enriched in polar residues; the sequence is QETTKQTTSA. Positions 62-79 are enriched in acidic residues; it reads DYDETEADPADTYGDTEA.

In Lactuca sativa (Garden lettuce), this protein is Protein 2.